A 495-amino-acid chain; its full sequence is GTPase Der (495 aa).

EngA-type G domains lie at 3–166 (PVIA…MDAE) and 208–381 (IKLA…DCST). GTP contacts are provided by residues 9–16 (GRPNVGKS), 56–60 (DTGGI), 118–121 (NKTD), 214–221 (GRPNVGKS), 261–265 (DTAGV), and 326–329 (NKWD). Positions 382–466 (KRVGTSLLTR…PIRIQFKEGE (85 aa)) constitute a KH-like domain.

Belongs to the TRAFAC class TrmE-Era-EngA-EngB-Septin-like GTPase superfamily. EngA (Der) GTPase family. In terms of assembly, associates with the 50S ribosomal subunit.

In terms of biological role, GTPase that plays an essential role in the late steps of ribosome biogenesis. This chain is GTPase Der, found in Yersinia pseudotuberculosis serotype O:3 (strain YPIII).